The primary structure comprises 148 residues: SsrA-binding protein (148 aa).

Residues 129–142 (ETEKKRDWEREKAR) show a composition bias toward basic and acidic residues. Positions 129 to 148 (ETEKKRDWEREKARIMRAGT) are disordered.

Belongs to the SmpB family.

It localises to the cytoplasm. Functionally, required for rescue of stalled ribosomes mediated by trans-translation. Binds to transfer-messenger RNA (tmRNA), required for stable association of tmRNA with ribosomes. tmRNA and SmpB together mimic tRNA shape, replacing the anticodon stem-loop with SmpB. tmRNA is encoded by the ssrA gene; the 2 termini fold to resemble tRNA(Ala) and it encodes a 'tag peptide', a short internal open reading frame. During trans-translation Ala-aminoacylated tmRNA acts like a tRNA, entering the A-site of stalled ribosomes, displacing the stalled mRNA. The ribosome then switches to translate the ORF on the tmRNA; the nascent peptide is terminated with the 'tag peptide' encoded by the tmRNA and targeted for degradation. The ribosome is freed to recommence translation, which seems to be the essential function of trans-translation. This chain is SsrA-binding protein, found in Burkholderia orbicola (strain AU 1054).